We begin with the raw amino-acid sequence, 381 residues long: MANNEDSNSNGLDSFDAVKQRFKDRSKKVVQTRELLSKQAVQTREILSKQAVKIAKQAEEHERFINKVTHLVGVLGFGGFCFLLGARPQDIPLVYCFFYVIFVPLRWIYYRFKKWHYYLLDFCYYANTIFLVDLLLYPKNEKLFMVCFSFAEGPLAWAIIVWRCSLVFSSPDKIVSVLIHLLPGLVFFTIRWWNPATFAAMHPVGTDRRVSWPYVEDKAYLFTWLFLVPLVVYTLWQVLYFLIVNVLRRQRLLRDPEVMTSYRELSKKAEKANNKLWQLSGLLGDQNRIWMYILFQAIFTVATMALTVPIFLSYRLHVIFQILKISAAVWNGGSFLLEVMPRQVIQKEKKKKAEMQPIEEQILHHEAVSHPTENEPKSTET.

Residues methionine 1–arginine 63 are Cytoplasmic-facing. A helical transmembrane segment spans residues phenylalanine 64–leucine 84. Residues glycine 85–glutamine 89 are Lumenal-facing. Residues aspartate 90–tyrosine 110 traverse the membrane as a helical segment. Residues arginine 111 to histidine 116 lie on the Cytoplasmic side of the membrane. Residues tyrosine 117–tyrosine 137 form a helical membrane-spanning segment. The Lumenal portion of the chain corresponds to proline 138 to glutamate 141. The chain crosses the membrane as a helical span at residues lysine 142 to tryptophan 162. Topologically, residues arginine 163 to lysine 173 are cytoplasmic. The helical transmembrane segment at isoleucine 174–asparagine 194 threads the bilayer. Topologically, residues proline 195 to threonine 223 are lumenal. The helical transmembrane segment at tryptophan 224–valine 244 threads the bilayer. Residues asparagine 245–methionine 291 lie on the Cytoplasmic side of the membrane. The chain crosses the membrane as a helical span at residues tyrosine 292–leucine 312. The Lumenal segment spans residues serine 313 to arginine 315. Residues leucine 316–leucine 336 form a helical membrane-spanning segment. Topologically, residues leucine 337–threonine 381 are cytoplasmic.

It belongs to the GPC1 family.

It is found in the membrane. The enzyme catalyses sn-glycerol 3-phosphocholine + an acyl-CoA = a 1-acyl-sn-glycero-3-phosphocholine + CoA. It catalyses the reaction sn-glycero-3-phosphoethanolamine + an acyl-CoA = a monoacyl-sn-glycero-3-phosphoethanolamine + CoA. It carries out the reaction sn-glycerol 3-phosphocholine + (9Z)-octadecenoyl-CoA = (9Z-octadecenoyl)-sn-glycero-3-phosphocholine + CoA. Functionally, glycerophosphocholine acyltransferase (GPCAT) that utilizes acyl-CoA to acylate glycero-3-phosphocholine (GPC), forming lysophosphatidylcholine (LPC). Shows broad acyl specificities with a preference for 16:0-CoA, polyunsaturated acyl-CoA, and the hydroxylated ricinoleoyl-CoA. Also catalyzes the acylation of glycero-3-phosphoethanolamine (GPE) with acyl-CoA. In addition to acyl-CoA, GPCAT efficiently utilizes LPC and lysophosphatidylethanolamine (LPE) as acyl donors in the acylation of GPC. Contributes to the maintenance of phosphatidylcholine (PC) homeostasis and might also have specific functions in acyl editing of PC, such as transferring acyl groups modified at the sn-2 position of PC to the sn-1. In Arabidopsis thaliana (Mouse-ear cress), this protein is Glycerophosphocholine acyltransferase 1.